Here is a 109-residue protein sequence, read N- to C-terminus: Keratin, type II microfibrillar (109 aa).

The interval 1–10 is linker 1; it reads QNRQCCESNL. The IF rod domain maps to 1–109; sequence QNRQCCESNL…RLYEEEIRVL (109 aa). The coil 1B stretch occupies residues 11-109; sequence EPLFSGYIET…RLYEEEIRVL (99 aa).

This sequence belongs to the intermediate filament family.

Wool microfibrillar keratin. The polypeptide is Keratin, type II microfibrillar (Ovis aries (Sheep)).